The sequence spans 237 residues: Ribosomal RNA large subunit methyltransferase E (237 aa).

S-adenosyl-L-methionine is bound by residues Gly80, Trp82, Asp108, Asp124, and Asp148. Lys188 functions as the Proton acceptor in the catalytic mechanism.

It belongs to the class I-like SAM-binding methyltransferase superfamily. RNA methyltransferase RlmE family.

The protein resides in the cytoplasm. It carries out the reaction uridine(2552) in 23S rRNA + S-adenosyl-L-methionine = 2'-O-methyluridine(2552) in 23S rRNA + S-adenosyl-L-homocysteine + H(+). In terms of biological role, specifically methylates the uridine in position 2552 of 23S rRNA at the 2'-O position of the ribose in the fully assembled 50S ribosomal subunit. This is Ribosomal RNA large subunit methyltransferase E from Jannaschia sp. (strain CCS1).